The sequence spans 62 residues: Large ribosomal subunit protein bL28 (62 aa).

The protein belongs to the bacterial ribosomal protein bL28 family.

This chain is Large ribosomal subunit protein bL28, found in Staphylococcus haemolyticus (strain JCSC1435).